A 382-amino-acid polypeptide reads, in one-letter code: Na(+)/H(+) antiporter NhaA 2 (382 aa).

The next 11 helical transmembrane spans lie at Met-7 to Leu-27, Leu-58 to Leu-78, Ser-94 to Ile-114, Gly-124 to Gly-144, Leu-153 to Phe-173, Leu-178 to Tyr-198, Tyr-199 to Leu-219, Asn-255 to Ile-275, Ile-291 to Ile-311, Phe-327 to Leu-347, and Leu-361 to Val-381.

This sequence belongs to the NhaA Na(+)/H(+) (TC 2.A.33) antiporter family.

The protein localises to the cell inner membrane. It carries out the reaction Na(+)(in) + 2 H(+)(out) = Na(+)(out) + 2 H(+)(in). Its function is as follows. Na(+)/H(+) antiporter that extrudes sodium in exchange for external protons. This chain is Na(+)/H(+) antiporter NhaA 2, found in Campylobacter jejuni subsp. jejuni serotype O:6 (strain 81116 / NCTC 11828).